Here is a 253-residue protein sequence, read N- to C-terminus: Sulfate transporter CysZ (253 aa).

The next 4 membrane-spanning stretches (helical) occupy residues 31–51 (FVILPLLVNILLMGGAFWWLF), 75–95 (LLWPLAVISVLLVFGYFFSTI), 151–171 (IVLLILYFIPGIGQTVAPVLW), and 222–242 (IPLLNLFIMPVAVCGATAMWV).

This sequence belongs to the CysZ family.

The protein localises to the cell inner membrane. Its function is as follows. High affinity, high specificity proton-dependent sulfate transporter, which mediates sulfate uptake. Provides the sulfur source for the cysteine synthesis pathway. This Shigella flexneri protein is Sulfate transporter CysZ.